Consider the following 334-residue polypeptide: Adenosine deaminase (334 aa).

Zn(2+)-binding residues include histidine 12 and histidine 14. Histidine 14, aspartate 16, and glycine 170 together coordinate substrate. Residue histidine 197 participates in Zn(2+) binding. The active-site Proton donor is the glutamate 200. Zn(2+) is bound at residue aspartate 278. Residue aspartate 279 participates in substrate binding.

It belongs to the metallo-dependent hydrolases superfamily. Adenosine and AMP deaminases family. Adenosine deaminase subfamily. Requires Zn(2+) as cofactor.

It carries out the reaction adenosine + H2O + H(+) = inosine + NH4(+). It catalyses the reaction 2'-deoxyadenosine + H2O + H(+) = 2'-deoxyinosine + NH4(+). Functionally, catalyzes the hydrolytic deamination of adenosine and 2-deoxyadenosine. The chain is Adenosine deaminase from Yersinia pseudotuberculosis serotype O:1b (strain IP 31758).